The sequence spans 285 residues: MRILIITGLSGSGKSTAVRALEDEGFFCQDNLPVALFPTFVDLVDNAKERIRDVALVMDIRGRDFNKGFEKVFQEITEAGHLVDILFFDATDEVIIRRFSETRRRHPAIDSGSVPEGIRSERQQLAGLRSFATQIIDTSELNVHQLKDLVISLVKGGEGGREMTVHLQSFGYRFGLPLESDLVMDVRFLPNPYFIPELKEFSGLDPKVRAYVLKHDETGEFLTKFKELLEFLLPGYKREGKSYLTISIGCTGGRHRSVVIAEEIRDFFKRKQLNLKVSHRDMEKG.

8-15 (GLSGSGKS) provides a ligand contact to ATP. Residue 59 to 62 (DIRG) coordinates GTP.

Belongs to the RapZ-like family.

Its function is as follows. Displays ATPase and GTPase activities. The protein is Nucleotide-binding protein Geob_2284 of Geotalea daltonii (strain DSM 22248 / JCM 15807 / FRC-32) (Geobacter daltonii).